Here is a 168-residue protein sequence, read N- to C-terminus: uncharacterized protein (168 aa).

Positions 1–52 (MVLGLASFPESLSSQSETATQPRRPSVKWDLGSDYRKGTEETTASGSNFRRE) are disordered. Polar residues predominate over residues 10–23 (ESLSSQSETATQPR). The span at 31-40 (LGSDYRKGTE) shows a compositional bias: basic and acidic residues.

This is an uncharacterized protein from Mus musculus (Mouse).